Here is a 196-residue protein sequence, read N- to C-terminus: HTH-type transcriptional regulator BetI (196 aa).

In terms of domain architecture, HTH tetR-type spans 8–68; sequence PVRREQLIRA…AAMRQILREL (61 aa). Positions 31–50 form a DNA-binding region, H-T-H motif; sequence TVATIAKKAGLSSGIVAHYF.

The protein operates within amine and polyamine biosynthesis; betaine biosynthesis via choline pathway [regulation]. In terms of biological role, repressor involved in the biosynthesis of the osmoprotectant glycine betaine. It represses transcription of the choline transporter BetT and the genes of BetAB involved in the synthesis of glycine betaine. The polypeptide is HTH-type transcriptional regulator BetI (Stenotrophomonas maltophilia (strain R551-3)).